The sequence spans 314 residues: Coiled-coil domain-containing protein 92 (314 aa).

Coiled-coil stretches lie at residues Met1 to Thr27 and Asp59 to Tyr113. 2 disordered regions span residues Leu153–Leu193 and Ala251–Val314. Residues Pro176 to Arg186 show a composition bias toward basic and acidic residues. Phosphoserine is present on Ser192. Residues Lys266 to His280 are compositionally biased toward basic residues.

As to quaternary structure, interacts with CEP164. In terms of processing, phosphorylated at Ser-192 by TTBK2.

It localises to the cytoplasm. The protein localises to the cytoskeleton. The protein resides in the microtubule organizing center. Its subcellular location is the centrosome. It is found in the centriole. In terms of biological role, interferon-stimulated protein that plays a role in innate immunity. This is Coiled-coil domain-containing protein 92 (Ccdc92) from Mus musculus (Mouse).